The sequence spans 276 residues: Large ribosomal subunit protein uL2 (276 aa).

Disordered regions lie at residues 37 to 59 and 224 to 276; these read QFQKSGRNNNGHITTRHKGGGHK and VAMN…RHKR. A compositionally biased stretch (basic residues) spans 50 to 59; that stretch reads TTRHKGGGHK.

The protein belongs to the universal ribosomal protein uL2 family. As to quaternary structure, part of the 50S ribosomal subunit. Forms a bridge to the 30S subunit in the 70S ribosome.

In terms of biological role, one of the primary rRNA binding proteins. Required for association of the 30S and 50S subunits to form the 70S ribosome, for tRNA binding and peptide bond formation. It has been suggested to have peptidyltransferase activity; this is somewhat controversial. Makes several contacts with the 16S rRNA in the 70S ribosome. This chain is Large ribosomal subunit protein uL2, found in Ralstonia nicotianae (strain ATCC BAA-1114 / GMI1000) (Ralstonia solanacearum).